We begin with the raw amino-acid sequence, 550 residues long: MTREPFLRMENIVKAFPGVVANDHIDLTVERGEIHGLLGENGAGKSTLMKILYGLYSQDDGEISLSGTRLRLDSPQDAIDAGIGMVHQHFMLIPRLTVAENVVLGEREPATPFRPDADAGGWLPDAVRSNSLVQSLAGRFSLGLDVPERRIQELADRYGFDIDVSAKVWELGVGQQQRVEILKALYRDVDLLILDEPTAVLTPTEADLLFDSLERLTDEGVSIIFITHKLEEVEAVVDRVTVLRDGENVGTVSTSDVSRADLAEMMVGREVLFTVDRERVAPGEPVLRARNVSATDDRGIEALSNVDLTVRRGEVVGIAGVSGNGQKELAEVIAGLRTVSAGELTVDGRDLTNASPRTFIDNGVSFVPEDRNRYGSAGDLSVMHNAAMKDFREDRFGSGVTLDYGELRAHAEALVEAFDVRGVHDVTDATAGDLSGGNLQKLILAREISRDPDLLVANQPTRGVDVGAIESIREAILDQRTEGTGVVLLSEDLDEIIDLSDRILVVYEGEVVYETTPEDADRERIGLEMTGGGDATATAGAQVRGLGGSS.

2 ABC transporter domains span residues 7–270 and 287–533; these read LRME…VGRE and LRAR…TGGG. ATP is bound at residue 39 to 46; sequence GENGAGKS. The tract at residues 529-550 is disordered; it reads MTGGGDATATAGAQVRGLGGSS.

The protein belongs to the ABC transporter superfamily. As to quaternary structure, the complex is composed of two ATP-binding proteins (TsgD13), two transmembrane proteins (TsgB13 and TsgC13) and a solute-binding protein (TsgA13).

It is found in the cell membrane. The enzyme catalyses D-glucose(out) + ATP + H2O = D-glucose(in) + ADP + phosphate + H(+). Its function is as follows. Part of an ABC transporter complex involved in glucose import. Responsible for energy coupling to the transport system. This chain is Glucose import ATP-binding protein TsgD13 (tsgD13), found in Haloferax volcanii (strain ATCC 29605 / DSM 3757 / JCM 8879 / NBRC 14742 / NCIMB 2012 / VKM B-1768 / DS2) (Halobacterium volcanii).